The sequence spans 207 residues: Small ribosomal subunit protein uS4 (207 aa).

Residues 35-54 (RPKPPGPQLGRPRRLSDRGQ) form a disordered region. In terms of domain architecture, S4 RNA-binding spans 97-163 (RRLDNVLFRL…AYFKTLAENI (67 aa)).

Belongs to the universal ribosomal protein uS4 family. As to quaternary structure, part of the 30S ribosomal subunit. Contacts protein S5. The interaction surface between S4 and S5 is involved in control of translational fidelity.

One of the primary rRNA binding proteins, it binds directly to 16S rRNA where it nucleates assembly of the body of the 30S subunit. Its function is as follows. With S5 and S12 plays an important role in translational accuracy. This Dehalococcoides mccartyi (strain CBDB1) protein is Small ribosomal subunit protein uS4.